We begin with the raw amino-acid sequence, 127 residues long: MSDPLLDAADFTDDGLIPAIVQDAETDQVLMMAYMTAETLQETLDTGRMVYWSRSRQERWVKGQTSGHTQTVEEARLDCDGDTLLFRVHQEGGACHTGFRSCFHRRAADDGWTTDGEKVFDPDAVYE.

Residue Asp-78 participates in Mg(2+) binding. Zn(2+) is bound at residue Cys-79. Asp-80 and Asp-82 together coordinate Mg(2+). Residues Cys-95 and Cys-102 each contribute to the Zn(2+) site.

This sequence belongs to the PRA-CH family. As to quaternary structure, homodimer. The cofactor is Mg(2+). It depends on Zn(2+) as a cofactor.

It is found in the cytoplasm. The enzyme catalyses 1-(5-phospho-beta-D-ribosyl)-5'-AMP + H2O = 1-(5-phospho-beta-D-ribosyl)-5-[(5-phospho-beta-D-ribosylamino)methylideneamino]imidazole-4-carboxamide. It participates in amino-acid biosynthesis; L-histidine biosynthesis; L-histidine from 5-phospho-alpha-D-ribose 1-diphosphate: step 3/9. Its function is as follows. Catalyzes the hydrolysis of the adenine ring of phosphoribosyl-AMP. The chain is Phosphoribosyl-AMP cyclohydrolase from Salinibacter ruber (strain DSM 13855 / M31).